Here is a 305-residue protein sequence, read N- to C-terminus: Glycine--tRNA ligase alpha subunit (305 aa).

Belongs to the class-II aminoacyl-tRNA synthetase family. Tetramer of two alpha and two beta subunits.

It is found in the cytoplasm. It catalyses the reaction tRNA(Gly) + glycine + ATP = glycyl-tRNA(Gly) + AMP + diphosphate. The chain is Glycine--tRNA ligase alpha subunit from Streptococcus pneumoniae (strain 70585).